Consider the following 317-residue polypeptide: USG-1 protein homolog (317 aa).

This sequence belongs to the aspartate-semialdehyde dehydrogenase family.

In Haemophilus influenzae (strain ATCC 51907 / DSM 11121 / KW20 / Rd), this protein is USG-1 protein homolog (usg).